Reading from the N-terminus, the 59-residue chain is Lantibiotic lacticin 3147 A1 (59 aa).

Residues 1–29 constitute a propeptide that is removed on maturation; the sequence is MNKNEIETQPVTWLEEVSDQNFDEDVFGA. The segment at residues 30–31 is a cross-link (lanthionine (Cys-Ser)); the sequence is CS. Thr32 and Thr34 each carry 2,3-didehydrobutyrine. At Ser36 the chain carries 2,3-didehydroalanine (Ser). Positions 38 to 48 form a cross-link, lanthionine (Ser-Cys); the sequence is SDYWGNNGAWC. 2 cross-links (beta-methyllanthionine (Thr-Cys)) span residues 49 to 54 and 51 to 58; these read TLTHEC and THECMAWC.

Maturation of lantibiotics involves the enzymatic conversion of Thr, and Ser into dehydrated AA and the formation of thioether bonds with cysteine. This is followed by membrane translocation and cleavage of the modified precursor. In terms of processing, it is not established whether the 2,3-didehydrobutyrines are the E- or Z-isomers. In the NMR model they were assumed to be the Z-isomer.

Its subcellular location is the secreted. Functionally, lanthionine-containing peptide antibiotic (lantibiotic) active on Gram-positive bacteria. The bactericidal activity of lantibiotics is based on depolarization of energized bacterial cytoplasmic membranes, initiated by the formation of aqueous transmembrane pores. When present individually lacticin 3147 A1 exhibits strong activity towards L.lactis strain AM2, weak activity towards L.lactis strain HP and no activity towards L.lactis strain IFPL359, but when combined with lacticin 3147 A2 it displays strong activity towards all three strains. This is Lantibiotic lacticin 3147 A1 from Lactococcus lactis subsp. lactis (Streptococcus lactis).